Consider the following 352-residue polypeptide: Ly6/PLAUR domain-containing protein 3 (352 aa).

Residues Met1–Ala32 form the signal peptide. The UPAR/Ly6 1 domain occupies Cys35–Pro128. Residues Asn120, Asn131, Asn178, and Asn185 are each glycosylated (N-linked (GlcNAc...) asparagine). One can recognise a UPAR/Ly6 2 domain in the interval Cys142–Asn224. Pro residues predominate over residues Arg236–Pro249. The tract at residues Arg236–Gly330 is disordered. Residues Ala250–Ser285 are compositionally biased toward low complexity. Basic and acidic residues-rich tracts occupy residues Ser286 to Ser300 and His309 to Glu320. Residue Gly330 is the site of GPI-anchor amidated glycine attachment. Positions Gly331–Leu352 are cleaved as a propeptide — removed in mature form.

As to quaternary structure, interacts with AGR2 and AGR3. Binds laminin-1 and laminin-5. Interacts with LGALS3. In terms of tissue distribution, found predominantly on the basal layers of squamous epithelium. Expressed in the gravid uterus and on epithelial of the upper gastrointestinal tract. It has been found in tumor lines which metastasize via the lymphatic system.

It localises to the cell membrane. In terms of biological role, supports cell migration. May be involved in tumor progression. The protein is Ly6/PLAUR domain-containing protein 3 (Lypd3) of Rattus norvegicus (Rat).